The chain runs to 981 residues: Helicase-like transcription factor CHR28 (981 aa).

2 disordered regions span residues M1–R66 and K112–E194. The span at S46–S65 shows a compositional bias: polar residues. Over residues F119–P128 the composition is skewed to pro residues. Over residues H166 to N176 the composition is skewed to polar residues. Residues P181–E194 are compositionally biased toward basic and acidic residues. In terms of domain architecture, Helicase ATP-binding spans E241–D526. D254–T261 contacts ATP. Disordered regions lie at residues D293–N337 and V439–D462. The segment covering V439–G451 has biased composition (basic residues). The RING-type; degenerate zinc-finger motif lies at C679–R718. Positions N779 to P798 are enriched in polar residues. Residues N779–D808 are disordered. Residues N799–D808 are compositionally biased toward acidic residues. A Helicase C-terminal domain is found at D804 to K976.

It belongs to the SNF2/RAD54 helicase family. RAD16 subfamily. In terms of assembly, interacts with SUVR2.

It localises to the nucleus. Probable helicase-like transcription factor involved in transcriptional gene silencing. Associates with SUVR2 and contributes to transcriptional gene silencing at RNA-directed DNA methylation (RdDM) target loci but also at RdDM-independent target loci. May be involved in nucleosome positioning to form ordered nucleosome arrays on chromatin. Associates with SUVR2 and functions redundantly with FRG1. Required for the efficient methylation of a broad range of RdDM target loci. This Arabidopsis thaliana (Mouse-ear cress) protein is Helicase-like transcription factor CHR28.